The sequence spans 62 residues: UPF0434 protein SPO3421 (62 aa).

It belongs to the UPF0434 family.

The polypeptide is UPF0434 protein SPO3421 (Ruegeria pomeroyi (strain ATCC 700808 / DSM 15171 / DSS-3) (Silicibacter pomeroyi)).